We begin with the raw amino-acid sequence, 428 residues long: AP-1 complex subunit mu-1 (428 aa).

Residues 170–426 (KNEVFLDVIE…ITMAGEYELR (257 aa)) form the MHD domain.

The protein belongs to the adaptor complexes medium subunit family. In terms of assembly, adaptor protein complex 1 (AP-1) is a heterotetramer composed of two large adaptins (gamma-type subunit and beta-type subunit), a medium adaptin (mu-type subunit) and a small adaptin (sigma-type subunit).

It localises to the golgi apparatus. Its subcellular location is the cytoplasmic vesicle. It is found in the clathrin-coated vesicle membrane. Functionally, subunit of clathrin-associated adaptor protein complex 1 that plays a role in protein sorting at the trans-Golgi network and early endosomes (TGN/EE). The AP complexes mediate the recruitment of clathrin to membranes and the recognition of sorting signals within the cytosolic tails of transmembrane cargo molecules. Functions redundantly with AP1M2 in multiple post-Golgi trafficking pathways leading from the TGN to the vacuole, the plasma membrane, and the cell-division plane. This chain is AP-1 complex subunit mu-1 (AP1M1), found in Arabidopsis thaliana (Mouse-ear cress).